We begin with the raw amino-acid sequence, 447 residues long: Elongation factor 1-alpha (447 aa).

The tr-type G domain maps to 5–230 (KIHISIVVIG…DQISEPKRPS (226 aa)). The segment at 14-21 (GHVDSGKS) is G1. 14–21 (GHVDSGKS) lines the GTP pocket. N6,N6-dimethyllysine is present on Lys-55. Residues 70–74 (GITID) are G2. Lys-79 carries the N6,N6,N6-trimethyllysine modification. Positions 91 to 94 (DAPG) are G3. GTP is bound by residues 91 to 95 (DAPGH) and 153 to 156 (NKMD). Residues 153 to 156 (NKMD) are G4. Lys-187 is subject to N6,N6,N6-trimethyllysine. The G5 stretch occupies residues 194-196 (SGF). At Lys-261 the chain carries N6-methyllysine. Glu-289 carries the 5-glutamyl glycerylphosphorylethanolamine modification. N6,N6,N6-trimethyllysine is present on Lys-306. A 5-glutamyl glycerylphosphorylethanolamine modification is found at Glu-362. The residue at position 396 (Lys-396) is an N6,N6,N6-trimethyllysine.

Belongs to the TRAFAC class translation factor GTPase superfamily. Classic translation factor GTPase family. EF-Tu/EF-1A subfamily.

It localises to the cytoplasm. Functionally, this protein promotes the GTP-dependent binding of aminoacyl-tRNA to the A-site of ribosomes during protein biosynthesis. The protein is Elongation factor 1-alpha of Daucus carota (Wild carrot).